The chain runs to 303 residues: Peptidyl-prolyl isomerase CWC27 (303 aa).

The 147-residue stretch at 7-153 folds into the PPIase cyclophilin-type domain; sequence ASGKCVLYTT…AEVTIPYFDG (147 aa). 2 disordered regions span residues 155-195 and 208-274; these read SGQK…PPLD and ERLT…TDLA.

This sequence belongs to the cyclophilin-type PPIase family. CWC27 subfamily. Associated with the spliceosome.

It localises to the cytoplasm. It is found in the nucleus. The catalysed reaction is [protein]-peptidylproline (omega=180) = [protein]-peptidylproline (omega=0). Functionally, PPIases accelerate the folding of proteins. It catalyzes the cis-trans isomerization of proline imidic peptide bonds in oligopeptides. Involved in pre-mRNA splicing. The sequence is that of Peptidyl-prolyl isomerase CWC27 (CWC27) from Eremothecium gossypii (strain ATCC 10895 / CBS 109.51 / FGSC 9923 / NRRL Y-1056) (Yeast).